The sequence spans 181 residues: ADP-ribosylation factor 1 (181 aa).

G2 carries the N-myristoyl glycine lipid modification. Residues 24-31 (GLDAAGKT), 67-71 (DVGGQ), and 126-129 (NKQD) each bind GTP.

This sequence belongs to the small GTPase superfamily. Arf family.

The protein resides in the golgi apparatus. The enzyme catalyses GTP + H2O = GDP + phosphate + H(+). Its function is as follows. GTP-binding protein involved in protein trafficking; may modulate vesicle budding and uncoating within the Golgi apparatus. This chain is ADP-ribosylation factor 1 (ARF1), found in Chlamydomonas reinhardtii (Chlamydomonas smithii).